The sequence spans 518 residues: Glutamate--cysteine ligase (518 aa).

This sequence belongs to the glutamate--cysteine ligase type 1 family. Type 1 subfamily.

It catalyses the reaction L-cysteine + L-glutamate + ATP = gamma-L-glutamyl-L-cysteine + ADP + phosphate + H(+). It participates in sulfur metabolism; glutathione biosynthesis; glutathione from L-cysteine and L-glutamate: step 1/2. The chain is Glutamate--cysteine ligase from Salmonella gallinarum (strain 287/91 / NCTC 13346).